The sequence spans 109 residues: Nucleoid-associated protein swp_1717 (109 aa).

Residues 88-109 (QKDKMAEVTGGMQLPPGMKMPF) are disordered.

The protein belongs to the YbaB/EbfC family. Homodimer.

It is found in the cytoplasm. It localises to the nucleoid. Binds to DNA and alters its conformation. May be involved in regulation of gene expression, nucleoid organization and DNA protection. This is Nucleoid-associated protein swp_1717 from Shewanella piezotolerans (strain WP3 / JCM 13877).